A 238-amino-acid chain; its full sequence is Probable transcriptional regulatory protein TC_0742 (238 aa).

A disordered region spans residues 1–21 (MAGHSKWANTKHRKERADHKK). A compositionally biased stretch (basic residues) spans 9-21 (NTKHRKERADHKK).

It belongs to the TACO1 family.

It is found in the cytoplasm. The protein is Probable transcriptional regulatory protein TC_0742 of Chlamydia muridarum (strain MoPn / Nigg).